A 355-amino-acid chain; its full sequence is Uroporphyrinogen decarboxylase (355 aa).

Substrate-binding positions include 27 to 31 (RQAGR), Asp77, Tyr154, Thr209, and His328.

It belongs to the uroporphyrinogen decarboxylase family. In terms of assembly, homodimer.

It localises to the cytoplasm. It catalyses the reaction uroporphyrinogen III + 4 H(+) = coproporphyrinogen III + 4 CO2. It functions in the pathway porphyrin-containing compound metabolism; protoporphyrin-IX biosynthesis; coproporphyrinogen-III from 5-aminolevulinate: step 4/4. In terms of biological role, catalyzes the decarboxylation of four acetate groups of uroporphyrinogen-III to yield coproporphyrinogen-III. The sequence is that of Uroporphyrinogen decarboxylase from Vibrio campbellii (strain ATCC BAA-1116).